A 271-amino-acid polypeptide reads, in one-letter code: Thiazole synthase (271 aa).

The Schiff-base intermediate with DXP role is filled by lysine 95. 1-deoxy-D-xylulose 5-phosphate-binding positions include glycine 156, 182-183 (AG), and 204-205 (NT).

The protein belongs to the ThiG family. In terms of assembly, homotetramer. Forms heterodimers with either ThiH or ThiS.

It is found in the cytoplasm. It carries out the reaction [ThiS sulfur-carrier protein]-C-terminal-Gly-aminoethanethioate + 2-iminoacetate + 1-deoxy-D-xylulose 5-phosphate = [ThiS sulfur-carrier protein]-C-terminal Gly-Gly + 2-[(2R,5Z)-2-carboxy-4-methylthiazol-5(2H)-ylidene]ethyl phosphate + 2 H2O + H(+). It functions in the pathway cofactor biosynthesis; thiamine diphosphate biosynthesis. Functionally, catalyzes the rearrangement of 1-deoxy-D-xylulose 5-phosphate (DXP) to produce the thiazole phosphate moiety of thiamine. Sulfur is provided by the thiocarboxylate moiety of the carrier protein ThiS. In vitro, sulfur can be provided by H(2)S. The protein is Thiazole synthase of Yersinia pseudotuberculosis serotype O:1b (strain IP 31758).